Reading from the N-terminus, the 42-residue chain is MNNPNQPVSYPIFTVRWLAIHAIGIPAVFFIGSITAMQFIQR.

A helical membrane pass occupies residues Trp17–Ser33. Heme is bound at residue His21.

This sequence belongs to the PsbE/PsbF family. In terms of assembly, heterodimer of an alpha subunit and a beta subunit. PSII is composed of 1 copy each of membrane proteins PsbA, PsbB, PsbC, PsbD, PsbE, PsbF, PsbH, PsbI, PsbJ, PsbK, PsbL, PsbM, PsbT, PsbX, PsbY, PsbZ, Psb30/Ycf12, at least 3 peripheral proteins of the oxygen-evolving complex and a large number of cofactors. It forms dimeric complexes. Requires heme b as cofactor.

It localises to the plastid. Its subcellular location is the cyanelle thylakoid membrane. Functionally, this b-type cytochrome is tightly associated with the reaction center of photosystem II (PSII). PSII is a light-driven water:plastoquinone oxidoreductase that uses light energy to abstract electrons from H(2)O, generating O(2) and a proton gradient subsequently used for ATP formation. It consists of a core antenna complex that captures photons, and an electron transfer chain that converts photonic excitation into a charge separation. This Cyanophora paradoxa protein is Cytochrome b559 subunit beta.